The following is a 1154-amino-acid chain: Paired amphipathic helix protein pst3 (1154 aa).

2 disordered regions span residues 1–71 (MDVM…RSVT) and 91–110 (SGKD…SSSN). Residues 9–27 (DSERDNPGDKVETQSDKNH) show a composition bias toward basic and acidic residues. Polar residues-rich tracts occupy residues 32-45 (SPSQ…TSLH) and 100-110 (QNAEGLSSSSN). Residues 111–181 (RPLDVNDALS…EGFNTFLPSG (71 aa)) enclose the PAH 1 domain. Disordered stretches follow at residues 199 to 249 (GTPM…STEN) and 321 to 376 (DNVD…KTSR). Over residues 228 to 241 (STSPTDSQPQPSAP) the composition is skewed to low complexity. Positions 252–322 (PRVDFNYAIA…EEFKLFLPDN (71 aa)) constitute a PAH 2 domain. 2 stretches are compositionally biased toward polar residues: residues 323-337 (VDST…QKSP) and 365-376 (AQISRSISKTSR). Positions 403-472 (SPYAATQEEL…LWFSEFIRWS (70 aa)) constitute a PAH 3 domain. Residues 797–824 (NSNNTNVSFQTDETQTEDETMSDIHPDD) are disordered.

Its subcellular location is the nucleus. The protein is Paired amphipathic helix protein pst3 (pst3) of Schizosaccharomyces pombe (strain 972 / ATCC 24843) (Fission yeast).